Reading from the N-terminus, the 180-residue chain is Prothoracicotropic hormone (180 aa).

Residues 1-15 form the signal peptide; sequence MKLLILCVMVHGLLA. The propeptide occupies 16-64; it reads EGPGQVLWKEQVVAPEFLLDDREDIASNRNAFFYEDKRSFRPEGLGEQV. 2 cysteine pairs are disulfide-bonded: C88–C123 and C111–C175.

In terms of assembly, homodimer; disulfide-linked.

Its subcellular location is the secreted. In terms of biological role, PTTH is a brain secretory polypeptide of insects which stimulates the prothoracic glands to produce and release ecdysone, the steroid essential to insect development. This chain is Prothoracicotropic hormone, found in Camponotus floridanus (Florida carpenter ant).